A 929-amino-acid polypeptide reads, in one-letter code: Chaperone protein ClpC1, chloroplastic (929 aa).

The N-terminal 38 residues, 1–38, are a transit peptide targeting the chloroplast; it reads MAMATRVLAQSTPPSLACYQRNVPSRGSGRSRRSVKMM. The region spanning 95 to 237 is the Clp R domain; the sequence is FERFTEKAIK…RTQVIRMVGE (143 aa). Repeat stretches follow at residues 98 to 163 and 173 to 237; these read FTEK…IGRG and FTPR…MVGE. The interval 257 to 504 is i; the sequence is LEEYGTNLTK…RVRLRHAQVP (248 aa). 302 to 309 lines the ATP pocket; that stretch reads GEPGVGKT. The 36-residue stretch at 511–546 folds into the UVR domain; the sequence is EKELRQITKEKNEAVRGQDFEKAGTLRDREIELRAE. Residues 552 to 571 form a disordered region; the sequence is AKGKEMSKAESETGEEGPMV. The segment covering 553-562 has biased composition (basic and acidic residues); that stretch reads KGKEMSKAES. Positions 571 to 762 are II; the sequence is VTESDIQHIV…LLIMTSNVGS (192 aa). 645-652 contributes to the ATP binding site; sequence GPTGVGKS. The span at 908–919 shows a compositional bias: polar residues; sequence LNGGSGTPTTSL. Residues 908–929 are disordered; it reads LNGGSGTPTTSLEEQEDSLPVA. A compositionally biased stretch (acidic residues) spans 920–929; the sequence is EEQEDSLPVA.

The protein belongs to the ClpA/ClpB family. ClpC subfamily. As to quaternary structure, homodimer. May form hexamer and interact with Clp core. Interacts (via N-terminus) with CLPS1. Interacts with CLPF. Highly expressed in rosette leaves. Expressed in roots, stems and inflorescences. Expressed in photosynthetic green tissues with high levels in young, developing leaf tissues.

It localises to the plastid. The protein resides in the chloroplast stroma. The protein localises to the chloroplast membrane. Functionally, molecular chaperone that hydrolyzes ATP and is associated with the chloroplast protein import apparatus. May function as the motor for chloroplast protein translocation, as translocation requires ATP hydrolysis in the stroma. May interact with a ClpP-like protease involved in degradation of denatured proteins in the chloroplast. Involved in the regulation of chlorophyll b biosynthesis through the destabilization of chlorophyllide a oxygenase (CAO) protein in response to the accumulation of chlorophyll b. Involved in leaf iron homeostasis. The sequence is that of Chaperone protein ClpC1, chloroplastic from Arabidopsis thaliana (Mouse-ear cress).